A 457-amino-acid polypeptide reads, in one-letter code: MATGKIVQIIGAVIDVEFPQDAVPKVYDALKVETGLTLEVQQQLGGGVVRCIALGTSDGLKRGLKVENTNKAIEVPVGTKTLGRIMNVLGEPIDEAGPIGEEERWTIHRAAPSYEEQANSTELLETGIKVIDLIAPFAKGGKVGLFGGAGVGKTVNMMELIRNIAIEHSGYSVFAGVGERTREGNDFYHEMKDSNVLDKVSLVYGQMNEPPGNRLRVALTGLTMAEKFRDEGRDVLFFVDNIYRYTLAGTEVSALLGRMPSAVGYQPTLAEEMGVLQERITSTKTGSITSVQAVYVPADDLTDPSPATTFAHLDSTVVLSRNIASLGIYPAIDPLDSTSRQLDPLVVGQEHYDVARGVQKTLQRYKELKDIIAILGMDELSEDDKLVVARARKIERFLSQPFHVAEVFNSVPGKFVPLKETIRGFKGILAGEYDHIPEQAFYMAGSIDEVVERANKM.

Residue 147–154 coordinates ATP; sequence GGAGVGKT.

Belongs to the ATPase alpha/beta chains family. As to quaternary structure, F-type ATPases have 2 components, CF(1) - the catalytic core - and CF(0) - the membrane proton channel. CF(1) has five subunits: alpha(3), beta(3), gamma(1), delta(1), epsilon(1). CF(0) has three main subunits: a(1), b(2) and c(9-12). The alpha and beta chains form an alternating ring which encloses part of the gamma chain. CF(1) is attached to CF(0) by a central stalk formed by the gamma and epsilon chains, while a peripheral stalk is formed by the delta and b chains.

It is found in the cell inner membrane. The catalysed reaction is ATP + H2O + 4 H(+)(in) = ADP + phosphate + 5 H(+)(out). In terms of biological role, produces ATP from ADP in the presence of a proton gradient across the membrane. The catalytic sites are hosted primarily by the beta subunits. The polypeptide is ATP synthase subunit beta (Glaesserella parasuis serovar 5 (strain SH0165) (Haemophilus parasuis)).